The sequence spans 381 residues: MYFSRDDLLQKETETLAPYAISNANNGGRIYEEEEHSYRLPFQRDRDRILHSSAFKRLQYKTQVFIFSVGENYRNRMTHTLEVAGLSRTIASALGLNSLLSESIALAHDLGHTPFGHAGQEILSGLMKDYGGFEHNKQSLRIVTSIEKKYPNFPGLNLCRETLKGLMKHGADYDSSVILLERKENGPSLEGMIADLSDEIAYTNHDIEDGWEMGYLHLGDLLENPFWKEVYEECKDQYKEVGEKILIRTSIRTLTNFLVSDLIQNIAHRLEKKQIKSTEDLALLWKQDFRIASFSKEVDLKFRELKSFLYEKLYRHEDLIRMSDYGKKIIESLFDYFLKHPEKIPDTYKERIEEESLYRVISDYVAGMTDRYAEKIYQSLP.

Residues 76–203 (RMTHTLEVAG…ADLSDEIAYT (128 aa)) form the HD domain.

This sequence belongs to the dGTPase family. Type 2 subfamily.

The polypeptide is Deoxyguanosinetriphosphate triphosphohydrolase-like protein (Leptospira interrogans serogroup Icterohaemorrhagiae serovar copenhageni (strain Fiocruz L1-130)).